Here is a 382-residue protein sequence, read N- to C-terminus: Pyrimidine monooxygenase RutA (382 aa).

FMN contacts are provided by residues 68 to 69 (IK), Asn-134, Glu-143, 159 to 160 (RY), and Ser-209.

The protein belongs to the NtaA/SnaA/DszA monooxygenase family. RutA subfamily.

It catalyses the reaction uracil + FMNH2 + NADH + O2 = (Z)-3-ureidoacrylate + FMN + NAD(+) + H2O + H(+). The catalysed reaction is thymine + FMNH2 + NADH + O2 = (Z)-2-methylureidoacrylate + FMN + NAD(+) + H2O + H(+). Functionally, catalyzes the pyrimidine ring opening between N-3 and C-4 by an unusual flavin hydroperoxide-catalyzed mechanism, adding oxygen atoms in the process to yield ureidoacrylate peracid, that immediately reacts with FMN forming ureidoacrylate and FMN-N(5)-oxide. The FMN-N(5)-oxide reacts spontaneously with NADH to produce FMN. Requires the flavin reductase RutF to regenerate FMN in vivo. This is Pyrimidine monooxygenase RutA from Escherichia coli O150:H5 (strain SE15).